The chain runs to 107 residues: C-X-C motif chemokine 2 (107 aa).

Residues 1-34 form the signal peptide; that stretch reads MARATLSAAPSNPRLLRVALLLLLLVAASRRAAG. Cystine bridges form between Cys43–Cys69 and Cys45–Cys85.

It belongs to the intercrine alpha (chemokine CxC) family. In terms of processing, the N-terminal processed form GRO-beta(5-73) is produced by proteolytic cleavage after secretion from bone marrow stromal cells.

It localises to the secreted. Produced by activated monocytes and neutrophils and expressed at sites of inflammation. Hematoregulatory chemokine, which, in vitro, suppresses hematopoietic progenitor cell proliferation. GRO-beta(5-73) shows a highly enhanced hematopoietic activity. This Homo sapiens (Human) protein is C-X-C motif chemokine 2 (CXCL2).